Consider the following 427-residue polypeptide: Zinc-finger homeodomain protein 7 (427 aa).

Disordered stretches follow at residues 1–60 (MEYK…SLMD) and 91–118 (LHAA…QRHH). Acidic residues predominate over residues 10–28 (EEEEEEEEEEDDEEEDEEE). The segment covering 50-60 (SSASSPSSLMD) has biased composition (low complexity). A ZF-HD dimerization-type; degenerate zinc finger spans residues 163-211 (YRECLKNHAARMGAHVLDGCGEFMSSPGDGAAALACAACGCHRSFHRRE). Disordered regions lie at residues 264–320 (KRPP…SKKR) and 375–427 (HLAK…QHDA). Composition is skewed to low complexity over residues 271–283 (VSPA…LAES) and 301–312 (HAAAVVAASASA). The homeobox DNA-binding region spans 318 to 381 (KKRFRTKFTA…NNKHLAKTPP (64 aa)). The segment covering 380–401 (PPSPTSQPPPPPLHHDPSPPPP) has biased composition (pro residues). Over residues 402–416 (PHHHHHHHHHHHPPQ) the composition is skewed to basic residues. A compositionally biased stretch (low complexity) spans 417–427 (HHQQQQQQHDA).

In terms of assembly, homo- and heterodimer with other ZFHD proteins.

Its subcellular location is the nucleus. Functionally, putative transcription factor. The protein is Zinc-finger homeodomain protein 7 (ZHD7) of Oryza sativa subsp. japonica (Rice).